Reading from the N-terminus, the 255-residue chain is MAVGKNKRLSKGKKGLKKKVVDPFTRKEWYDIKAPSTFENRNVGKTLVNKSTGLKSASDALKGRVVEVCLADLQGSEDHSFRKVKLRVDDVQGKNLLTNFHGMDFTADKLRSMVRKWQTLIEANVTVKTSDEYIIRVFAIAFTRKQSNQVKRTAYAQSSHIRAIRKVISDILTREVSNSTLAQFTSKLIPEVINKEIENATKDIFPLQNVHIRKVKLLKQPKFDLGSLMALHGEGSAEEKGKKVSGFKDEVLETV.

An N-acetylalanine; partial modification is found at alanine 2.

This sequence belongs to the eukaryotic ribosomal protein eS1 family. Component of the small ribosomal subunit. Mature ribosomes consist of a small (40S) and a large (60S) subunit. The 40S subunit contains about 33 different proteins and 1 molecule of RNA (18S). The 60S subunit contains about 49 different proteins and 3 molecules of RNA (25S, 5.8S and 5S).

The protein resides in the cytoplasm. In Candida glabrata (strain ATCC 2001 / BCRC 20586 / JCM 3761 / NBRC 0622 / NRRL Y-65 / CBS 138) (Yeast), this protein is Small ribosomal subunit protein eS1.